The following is a 309-amino-acid chain: L-aminoadipate-semialdehyde dehydrogenase-phosphopantetheinyl transferase (309 aa).

CoA is bound by residues arginine 47, 86–91 (RTSKGK), and 108–111 (NISH). Positions 129 and 181 each coordinate Mg(2+). 181-185 (ESFIK) is a CoA binding site.

The protein belongs to the P-Pant transferase superfamily. AcpS family. Monomer. Mg(2+) serves as cofactor.

The protein localises to the cytoplasm. Its subcellular location is the cytosol. The enzyme catalyses apo-[ACP] + CoA = holo-[ACP] + adenosine 3',5'-bisphosphate + H(+). The catalysed reaction is apo-[ACP] + acetyl-CoA = acetyl-[ACP] + adenosine 3',5'-bisphosphate + H(+). Its function is as follows. Catalyzes the post-translational modification of target proteins by phosphopantetheine. Can transfer the 4'-phosphopantetheine moiety from coenzyme A, regardless of whether the CoA is presented in the free thiol form or as an acetyl thioester, to a serine residue of a broad range of acceptors including the acyl carrier domain of FASN. The polypeptide is L-aminoadipate-semialdehyde dehydrogenase-phosphopantetheinyl transferase (Aasdhppt) (Rattus norvegicus (Rat)).